A 229-amino-acid polypeptide reads, in one-letter code: 2-C-methyl-D-erythritol 4-phosphate cytidylyltransferase (229 aa).

This sequence belongs to the IspD/TarI cytidylyltransferase family. IspD subfamily. In terms of assembly, homodimer.

The catalysed reaction is 2-C-methyl-D-erythritol 4-phosphate + CTP + H(+) = 4-CDP-2-C-methyl-D-erythritol + diphosphate. Its pathway is isoprenoid biosynthesis; isopentenyl diphosphate biosynthesis via DXP pathway; isopentenyl diphosphate from 1-deoxy-D-xylulose 5-phosphate: step 2/6. Its function is as follows. Catalyzes the formation of 4-diphosphocytidyl-2-C-methyl-D-erythritol from CTP and 2-C-methyl-D-erythritol 4-phosphate (MEP). In Wigglesworthia glossinidia brevipalpis, this protein is 2-C-methyl-D-erythritol 4-phosphate cytidylyltransferase.